Here is a 782-residue protein sequence, read N- to C-terminus: MEVRKLSISWQFLIVLVLILQILSALDFDPYKVLGVSRTASQADIKKAYKKLAREWHPDKNKDPGAEDKFIQISKAYEILSNEEKRSNYDQYGDAGENQGYQKQQQQREYRFRHFHENFYFDESFFHFPFNSERRDSIDEKYLLHFSHYVNEVVPDSFKKPYLIKITSDWCFSCIHIEPVWKEVVQELEELGVGIGVVHAGYERRLAHHLGAHSTPSILGIINGKISFFRNAVVRENLRQFVESLLPGNLVEKVTGKNYVRFLSGWQQENKPHVLLFDQTPIVPLLYKLTAFAYKDYLSFGYVYVGLRGTEEMTRRYNINIYAPTLLVFKEHINKPADVIQARGMKKQIIDDFITQNKHLLAARLTSQKLFHELCPVRRSHRQRKYCVVLLTAETTKLSKPFEAFLSFALANTQDTVRFVHVYSNRQQEFAGTLLPDGEAFQGKSAVSILERRNTAGRVVYKTLEDPWTGSESDKFILLGYLDQLRKDPALLSSEAVLPDLTDELAPVFLLRWFYSACDYISDCWDSIFHNNWREMMPLLSLIFSALFILFGTVIVQAFSDSSDERESSPPDKEEAQEKTGKTEPSFTKENSSKIPKKGFVEVTELTDVTYTSNLVRLRPGHMNVVLILSNSTKTSLLQKFALEVYTFTGSSCLHFSFLSLDKHREWLEYLLEFAQDAAPIPNQYDKHFMERDYTGYVLALNGHKKYFCLFKPQKTVEEEEAIGSCSDVDSSLYLGESRGKPSCGLGSRPIKGKLSKLSLWMERLLEGSLQRFYIPSWPELD.

Positions 1 to 25 are cleaved as a signal peptide; it reads MEVRKLSISWQFLIVLVLILQILSA. At 26–535 the chain is on the cytoplasmic side; that stretch reads LDFDPYKVLG…DSIFHNNWRE (510 aa). Residues 29–93 form the J domain; it reads DPYKVLGVSR…EKRSNYDQYG (65 aa). The Thioredoxin domain maps to 119–247; the sequence is FYFDESFFHF…LRQFVESLLP (129 aa). A helical; Anchor for type IV membrane protein membrane pass occupies residues 536 to 556; sequence MMPLLSLIFSALFILFGTVIV. Residues 557–782 lie on the Extracellular side of the membrane; sequence QAFSDSSDER…FYIPSWPELD (226 aa). Residues 562–593 form a disordered region; it reads SSDERESSPPDKEEAQEKTGKTEPSFTKENSS. The segment covering 563 to 582 has biased composition (basic and acidic residues); that stretch reads SDERESSPPDKEEAQEKTGK. A compositionally biased stretch (polar residues) spans 583–593; it reads TEPSFTKENSS. N-linked (GlcNAc...) asparagine glycosylation occurs at Asn631.

The protein resides in the endoplasmic reticulum membrane. Functionally, plays an important role in regulating the size of autophagosomes during the formation process. This chain is DnaJ homolog subfamily C member 16 (DNAJC16), found in Pongo abelii (Sumatran orangutan).